A 275-amino-acid chain; its full sequence is NH(3)-dependent NAD(+) synthetase (275 aa).

ATP is bound at residue 50–57; that stretch reads GISGGVDS. Asp56 is a binding site for Mg(2+). Residue Arg147 participates in deamido-NAD(+) binding. Thr167 lines the ATP pocket. Glu172 is a binding site for Mg(2+). Deamido-NAD(+)-binding residues include Lys180 and Asp187. ATP is bound by residues Lys196 and Thr218. Position 267-268 (267-268) interacts with deamido-NAD(+); the sequence is HK.

It belongs to the NAD synthetase family. As to quaternary structure, homodimer.

The catalysed reaction is deamido-NAD(+) + NH4(+) + ATP = AMP + diphosphate + NAD(+) + H(+). The protein operates within cofactor biosynthesis; NAD(+) biosynthesis; NAD(+) from deamido-NAD(+) (ammonia route): step 1/1. In terms of biological role, catalyzes the ATP-dependent amidation of deamido-NAD to form NAD. Uses ammonia as a nitrogen source. The polypeptide is NH(3)-dependent NAD(+) synthetase (Pseudomonas aeruginosa (strain LESB58)).